A 150-amino-acid polypeptide reads, in one-letter code: Ribosome maturation factor RimP (150 aa).

This sequence belongs to the RimP family.

Its subcellular location is the cytoplasm. Its function is as follows. Required for maturation of 30S ribosomal subunits. This chain is Ribosome maturation factor RimP, found in Francisella philomiragia subsp. philomiragia (strain ATCC 25017 / CCUG 19701 / FSC 153 / O#319-036).